The following is a 166-amino-acid chain: Large ribosomal subunit protein uL10 (166 aa).

Belongs to the universal ribosomal protein uL10 family. In terms of assembly, part of the ribosomal stalk of the 50S ribosomal subunit. The N-terminus interacts with L11 and the large rRNA to form the base of the stalk. The C-terminus forms an elongated spine to which L12 dimers bind in a sequential fashion forming a multimeric L10(L12)X complex.

Forms part of the ribosomal stalk, playing a central role in the interaction of the ribosome with GTP-bound translation factors. The polypeptide is Large ribosomal subunit protein uL10 (Pseudomonas entomophila (strain L48)).